Reading from the N-terminus, the 107-residue chain is DNA-directed RNA polymerase subunit omega (107 aa).

The interval 81–107 (MEEEAAKGNADAGQGEGDAPKTPGQDG) is disordered.

The protein belongs to the RNA polymerase subunit omega family. The RNAP catalytic core consists of 2 alpha, 1 beta, 1 beta' and 1 omega subunit. When a sigma factor is associated with the core the holoenzyme is formed, which can initiate transcription.

The catalysed reaction is RNA(n) + a ribonucleoside 5'-triphosphate = RNA(n+1) + diphosphate. Its function is as follows. Promotes RNA polymerase assembly. Latches the N- and C-terminal regions of the beta' subunit thereby facilitating its interaction with the beta and alpha subunits. This chain is DNA-directed RNA polymerase subunit omega, found in Alkalilimnicola ehrlichii (strain ATCC BAA-1101 / DSM 17681 / MLHE-1).